The primary structure comprises 368 residues: Protein mab-21-like 3 (368 aa).

It belongs to the mab-21 family.

This is Protein mab-21-like 3 (mab21L3) from Xenopus laevis (African clawed frog).